The sequence spans 257 residues: Homeobox protein goosecoid (257 aa).

Residues 160-219 (KRRHRTIFTDEQLEALENLFQETKYPDVGTREQLARKVHLREEKVEVWFKNRRAKWRRQK) constitute a DNA-binding region (homeobox). A disordered region spans residues 213-257 (AKWRRQKRSSSEESENAEKWNKTSSSKASPEKREEEGKSDLDSDS). Basic and acidic residues predominate over residues 241–257 (SPEKREEEGKSDLDSDS).

Belongs to the paired homeobox family. Bicoid subfamily.

It is found in the nucleus. In terms of biological role, regulates chordin (CHRD). May play a role in spatial programing within discrete embryonic fields or lineage compartments during organogenesis. In concert with NKX3-2, plays a role in defining the structural components of the middle ear; required for the development of the entire tympanic ring. Probably involved in the regulatory networks that define neural crest cell fate specification and determine mesoderm cell lineages in mammals. The chain is Homeobox protein goosecoid (GSC) from Saguinus labiatus (Red-chested mustached tamarin).